A 114-amino-acid chain; its full sequence is Prefoldin subunit 6 (114 aa).

An N-acetylserine modification is found at S2.

The protein belongs to the prefoldin subunit beta family. Heterohexamer of two PFD-alpha type and four PFD-beta type subunits.

It is found in the nucleus. Binds specifically to cytosolic chaperonin (c-CPN) and transfers target proteins to it. Binds to nascent polypeptide chain and promotes folding in an environment in which there are many competing pathways for nonnative proteins. This Saccharomyces cerevisiae (strain ATCC 204508 / S288c) (Baker's yeast) protein is Prefoldin subunit 6 (YKE2).